A 301-amino-acid chain; its full sequence is uncharacterized protein (301 aa).

Residues E146, E148, and D177 each contribute to the a divalent metal cation site.

The protein belongs to the FAH family.

This is an uncharacterized protein from Staphylococcus saprophyticus subsp. saprophyticus (strain ATCC 15305 / DSM 20229 / NCIMB 8711 / NCTC 7292 / S-41).